Here is a 278-residue protein sequence, read N- to C-terminus: Sulfur carrier protein FdhD (278 aa).

The active-site Cysteine persulfide intermediate is the C121. Residue 260–265 (FCKPGR) coordinates Mo-bis(molybdopterin guanine dinucleotide).

This sequence belongs to the FdhD family.

The protein localises to the cytoplasm. Its function is as follows. Required for formate dehydrogenase (FDH) activity. Acts as a sulfur carrier protein that transfers sulfur from IscS to the molybdenum cofactor prior to its insertion into FDH. The polypeptide is Sulfur carrier protein FdhD (Salmonella paratyphi A (strain ATCC 9150 / SARB42)).